We begin with the raw amino-acid sequence, 468 residues long: Argininosuccinate lyase (468 aa).

The protein belongs to the lyase 1 family. Argininosuccinate lyase subfamily.

The protein resides in the cytoplasm. The catalysed reaction is 2-(N(omega)-L-arginino)succinate = fumarate + L-arginine. It functions in the pathway amino-acid biosynthesis; L-arginine biosynthesis; L-arginine from L-ornithine and carbamoyl phosphate: step 3/3. The polypeptide is Argininosuccinate lyase (Cutibacterium acnes (strain DSM 16379 / KPA171202) (Propionibacterium acnes)).